We begin with the raw amino-acid sequence, 819 residues long: Plastid division protein CDP1, chloroplastic (819 aa).

The transit peptide at 1–76 directs the protein to the chloroplast; the sequence is MPVAYTFPVL…NAAGGGIHVV (76 aa). Residues 77 to 572 are Stromal-facing; the sequence is DNAPSRTSSL…NKIWDEWLSQ (496 aa). Residues 419–439 adopt a coiled-coil conformation; sequence EAEALEKLKQLESNSDSAVRN. A helical membrane pass occupies residues 573–593; it reads SSLIGRVSVVALLGCTVFFSL. The Chloroplast intermembrane segment spans residues 594–819; the sequence is KLSGIRSGRL…FCQSDIQIQK (226 aa). A coiled-coil region spans residues 762–782; sequence IAGEAAEIEALLEEAAELVDE.

In terms of assembly, self-interacts. Interacts (via N-terminus) with ARC3 (via MORN domains). Binds (via N-terminus) to FTSZ2 proteins, FTSZ2-1 and FTSZ2-2. Recruited ARC3 to the middle of the plastid where subsequent complex made of CDP1/PARC6, ARC3 and FtsZ proteins can form; this complex enhances the dynamics of Z rings during chloroplast division. Interacts (via C-terminus) with PDV1 (via C-terminus). Interacts with MIND1. Exclusively expressed in young green tissues such as young cotyledons, shoot apex, emerging leaves and budding inflorescence.

The protein localises to the plastid. Its subcellular location is the chloroplast inner membrane. Component of the plastid division machinery required for PDV1 localization to constriction sites. Involved in chloroplast division site placement. Required for the proper formation of FtsZ rings at the division site in nongreen plastids (e.g. etioplasts). Inhibits FtsZ assembly, functioning as an antagonistic regulator of FtsZ dynamics against ARC6, by recruiting ARC3 to the middle of the plastid to facilitate its interaction with FtsZ proteins. Required during stromule biogenesis in the leaf epidermis, especially in non-mesophyll cells plastids. The chain is Plastid division protein CDP1, chloroplastic from Arabidopsis thaliana (Mouse-ear cress).